A 363-amino-acid chain; its full sequence is Chorismate synthase (363 aa).

The NADP(+) site is built by R48 and R54. FMN-binding positions include 125-127 (RSS), 237-238 (NA), G277, 292-296 (KPTSS), and R318.

This sequence belongs to the chorismate synthase family. Homotetramer. The cofactor is FMNH2.

It carries out the reaction 5-O-(1-carboxyvinyl)-3-phosphoshikimate = chorismate + phosphate. The protein operates within metabolic intermediate biosynthesis; chorismate biosynthesis; chorismate from D-erythrose 4-phosphate and phosphoenolpyruvate: step 7/7. Catalyzes the anti-1,4-elimination of the C-3 phosphate and the C-6 proR hydrogen from 5-enolpyruvylshikimate-3-phosphate (EPSP) to yield chorismate, which is the branch point compound that serves as the starting substrate for the three terminal pathways of aromatic amino acid biosynthesis. This reaction introduces a second double bond into the aromatic ring system. In Pseudomonas putida (strain W619), this protein is Chorismate synthase.